The sequence spans 111 residues: uncharacterized protein (111 aa).

Its subcellular location is the cytoplasm. It localises to the nucleus. This is an uncharacterized protein from Schizosaccharomyces pombe (strain 972 / ATCC 24843) (Fission yeast).